Here is a 567-residue protein sequence, read N- to C-terminus: MKQSKVFIPTMRDVPSEAEAQSHRLLLKSGLIKQSTSGIYSYLPLATRVLNNITAIVRQEMERIDSVEILMPALQQAELWEESGRWGAYGPELMRLQDRHGRQFALGPTHEELVTSIVRNELKSYKQLPMTLFQIQSKFRDEKRPRFGLLRGREFIMKDAYSFHADEASLDQTYQDMYQAYSRIFERVGINARPVVADSGAIGGSHTHEFMALSAIGEDTIVYSKESDYAANIEKAEVVYEPNHKHTTVQPLEKIETPNVKTAQELADFLGRPVDEIVKTMIFKVDGEYIMVLVRGHHEINDIKLKSYFGTDNIELATQDEIVNLVGANPGSLGPVIDKEIKIYADNFVQDLNNLVVGANEDGYHLINVNVGRDFNVDEYGDFRFILEGEKLSDGSGVAHFAEGIEVGQVFKLGTKYSESMNATFLDNQGKAQSLIMGCYGIGISRTLSAIVEQNHDDNGIVWPKSVTPFDLHLISINPKKDDQRELADALYAEFNTKFDVLYDDRQERAGVKFNDADLIGLPLRIVVGKRASEGIVEVKERLTGDSEEVHIDDLMTVITNKYDNLK.

The protein belongs to the class-II aminoacyl-tRNA synthetase family. ProS type 1 subfamily. As to quaternary structure, homodimer.

The protein resides in the cytoplasm. The catalysed reaction is tRNA(Pro) + L-proline + ATP = L-prolyl-tRNA(Pro) + AMP + diphosphate. Its function is as follows. Catalyzes the attachment of proline to tRNA(Pro) in a two-step reaction: proline is first activated by ATP to form Pro-AMP and then transferred to the acceptor end of tRNA(Pro). As ProRS can inadvertently accommodate and process non-cognate amino acids such as alanine and cysteine, to avoid such errors it has two additional distinct editing activities against alanine. One activity is designated as 'pretransfer' editing and involves the tRNA(Pro)-independent hydrolysis of activated Ala-AMP. The other activity is designated 'posttransfer' editing and involves deacylation of mischarged Ala-tRNA(Pro). The misacylated Cys-tRNA(Pro) is not edited by ProRS. This Staphylococcus aureus (strain USA300) protein is Proline--tRNA ligase.